A 249-amino-acid polypeptide reads, in one-letter code: tRNA pseudouridine synthase A (249 aa).

Asp-54 functions as the Nucleophile in the catalytic mechanism. Residue Tyr-111 coordinates substrate.

Belongs to the tRNA pseudouridine synthase TruA family. Homodimer.

The catalysed reaction is uridine(38/39/40) in tRNA = pseudouridine(38/39/40) in tRNA. Its function is as follows. Formation of pseudouridine at positions 38, 39 and 40 in the anticodon stem and loop of transfer RNAs. This Mycoplasma capricolum subsp. capricolum (strain California kid / ATCC 27343 / NCTC 10154) protein is tRNA pseudouridine synthase A.